A 110-amino-acid polypeptide reads, in one-letter code: Large ribosomal subunit protein P2 (110 aa).

Ser-59 is modified (O-(pantetheine 4'-phosphoryl)serine; in acyl carrier protein form). Residues 62 to 110 (LASVPSGGAAPAAAAGGAAAGGAAEEKAEDKPAEKDEESDDDMGFGLFD) are disordered. The segment covering 63-84 (ASVPSGGAAPAAAAGGAAAGGA) has biased composition (low complexity). Residues 85–95 (AEEKAEDKPAE) are compositionally biased toward basic and acidic residues. Ser-100 carries the post-translational modification Phosphoserine; in ribosomal stalk form.

This sequence belongs to the eukaryotic ribosomal protein P1/P2 family. The phosphorylated form is part of the ribosomal stalk involved in the interaction of the elongation factors with the ribosome during protein synthesis. The phosphopantetheinylated form is part of the 10S triacylglycerol biosynthetic complex involved in de novo fatty acid biosynthesis. In terms of processing, 4'-phosphopantetheine is transferred from CoA to a specific serine by acpS. This modification is essential for activity because fatty acids are bound in thioester linkage to the sulfhydryl of the prosthetic group.

Its subcellular location is the cytoplasm. Functionally, probable bifunctional protein. The phosphorylated protein plays an important role in the elongation step of protein synthesis. The phosphopantetheinylated protein acts as an acyl carrier protein. The sequence is that of Large ribosomal subunit protein P2 from Rhodotorula glutinis (Yeast).